Consider the following 150-residue polypeptide: Macrodomain Ter protein (150 aa).

Belongs to the MatP family. As to quaternary structure, homodimer.

It is found in the cytoplasm. Functionally, required for spatial organization of the terminus region of the chromosome (Ter macrodomain) during the cell cycle. Prevents early segregation of duplicated Ter macrodomains during cell division. Binds specifically to matS, which is a 13 bp signature motif repeated within the Ter macrodomain. This chain is Macrodomain Ter protein, found in Escherichia coli O6:K15:H31 (strain 536 / UPEC).